We begin with the raw amino-acid sequence, 446 residues long: Probable glycine dehydrogenase (decarboxylating) subunit 1 (446 aa).

This sequence belongs to the GcvP family. N-terminal subunit subfamily. As to quaternary structure, the glycine cleavage system is composed of four proteins: P, T, L and H. In this organism, the P 'protein' is a heterodimer of two subunits.

The enzyme catalyses N(6)-[(R)-lipoyl]-L-lysyl-[glycine-cleavage complex H protein] + glycine + H(+) = N(6)-[(R)-S(8)-aminomethyldihydrolipoyl]-L-lysyl-[glycine-cleavage complex H protein] + CO2. The glycine cleavage system catalyzes the degradation of glycine. The P protein binds the alpha-amino group of glycine through its pyridoxal phosphate cofactor; CO(2) is released and the remaining methylamine moiety is then transferred to the lipoamide cofactor of the H protein. This Methylocella silvestris (strain DSM 15510 / CIP 108128 / LMG 27833 / NCIMB 13906 / BL2) protein is Probable glycine dehydrogenase (decarboxylating) subunit 1.